The following is a 271-amino-acid chain: Phosphate import ATP-binding protein PstB (271 aa).

The region spanning 24 to 266 (MIGQDVSVYY…PDDPRTQDYI (243 aa)) is the ABC transporter domain. 56–63 (GPSGCGKS) lines the ATP pocket.

The protein belongs to the ABC transporter superfamily. Phosphate importer (TC 3.A.1.7) family. The complex is composed of two ATP-binding proteins (PstB), two transmembrane proteins (PstC and PstA) and a solute-binding protein (PstS).

It is found in the cell inner membrane. It catalyses the reaction phosphate(out) + ATP + H2O = ADP + 2 phosphate(in) + H(+). Part of the ABC transporter complex PstSACB involved in phosphate import. Responsible for energy coupling to the transport system. The polypeptide is Phosphate import ATP-binding protein PstB (Rhizobium etli (strain ATCC 51251 / DSM 11541 / JCM 21823 / NBRC 15573 / CFN 42)).